The primary structure comprises 64 residues: Large ribosomal subunit protein bL35 (64 aa).

The segment at 27 to 47 (MNGSHNLEKKNRKRSRRLHQA) is disordered. Residues 36 to 45 (KNRKRSRRLH) are compositionally biased toward basic residues.

This sequence belongs to the bacterial ribosomal protein bL35 family.

The sequence is that of Large ribosomal subunit protein bL35 from Chlorobium phaeobacteroides (strain DSM 266 / SMG 266 / 2430).